Here is a 272-residue protein sequence, read N- to C-terminus: 4-hydroxy-tetrahydrodipicolinate reductase (272 aa).

10 to 15 (GAAGRM) serves as a coordination point for NAD(+). Arg37 contributes to the NADP(+) binding site. Residues 100–102 (GTT) and 124–127 (SGNM) each bind NAD(+). His157 serves as the catalytic Proton donor/acceptor. His158 provides a ligand contact to (S)-2,3,4,5-tetrahydrodipicolinate. Catalysis depends on Lys161, which acts as the Proton donor. 167–168 (GT) is a binding site for (S)-2,3,4,5-tetrahydrodipicolinate.

Belongs to the DapB family.

It localises to the cytoplasm. It catalyses the reaction (S)-2,3,4,5-tetrahydrodipicolinate + NAD(+) + H2O = (2S,4S)-4-hydroxy-2,3,4,5-tetrahydrodipicolinate + NADH + H(+). The enzyme catalyses (S)-2,3,4,5-tetrahydrodipicolinate + NADP(+) + H2O = (2S,4S)-4-hydroxy-2,3,4,5-tetrahydrodipicolinate + NADPH + H(+). It functions in the pathway amino-acid biosynthesis; L-lysine biosynthesis via DAP pathway; (S)-tetrahydrodipicolinate from L-aspartate: step 4/4. Its function is as follows. Catalyzes the conversion of 4-hydroxy-tetrahydrodipicolinate (HTPA) to tetrahydrodipicolinate. This Methylocella silvestris (strain DSM 15510 / CIP 108128 / LMG 27833 / NCIMB 13906 / BL2) protein is 4-hydroxy-tetrahydrodipicolinate reductase.